Reading from the N-terminus, the 684-residue chain is Soluble guanylate cyclase gcy-32 (684 aa).

Residue H105 coordinates heme. Positions 396 to 432 form a coiled coil; that stretch reads DVEVNLQLEANNEQLETMTRELELERQKTDSILKDML. Residues 454–582 enclose the Guanylate cyclase domain; it reads TVMFCDLPAF…ETVTLASQME (129 aa). Mg(2+) is bound by residues D459 and D503.

It belongs to the adenylyl cyclase class-4/guanylyl cyclase family. As to quaternary structure, heterodimer; with other soluble guanylate cyclases. Heme serves as cofactor. As to expression, expressed in a small number of neurons, corresponding to URX, AQR and PQR neurons.

It is found in the cytoplasm. It carries out the reaction GTP = 3',5'-cyclic GMP + diphosphate. Its activity is regulated as follows. May be regulated by molecular oxygen. Probably not activated by nitric oxide (NO). In terms of biological role, synthesizes cyclic GMP (cGMP) from GTP. Influences aerotaxis responses, aggregation and bordering behaviors (gathering around the edge of a bacterial lawn) in combination with other soluble guanylate cyclases. The sequence is that of Soluble guanylate cyclase gcy-32 (gcy-32) from Caenorhabditis elegans.